Reading from the N-terminus, the 223-residue chain is Cytidylate kinase (223 aa).

Position 13 to 21 (Gly-13 to Thr-21) interacts with ATP.

It belongs to the cytidylate kinase family. Type 1 subfamily.

The protein resides in the cytoplasm. The enzyme catalyses CMP + ATP = CDP + ADP. The catalysed reaction is dCMP + ATP = dCDP + ADP. This chain is Cytidylate kinase, found in Nitrosomonas europaea (strain ATCC 19718 / CIP 103999 / KCTC 2705 / NBRC 14298).